We begin with the raw amino-acid sequence, 122 residues long: Large ribosomal subunit protein uL18 (122 aa).

It belongs to the universal ribosomal protein uL18 family. As to quaternary structure, part of the 50S ribosomal subunit; part of the 5S rRNA/L5/L18/L25 subcomplex. Contacts the 5S and 23S rRNAs.

In terms of biological role, this is one of the proteins that bind and probably mediate the attachment of the 5S RNA into the large ribosomal subunit, where it forms part of the central protuberance. This chain is Large ribosomal subunit protein uL18, found in Thermotoga neapolitana (strain ATCC 49049 / DSM 4359 / NBRC 107923 / NS-E).